The sequence spans 605 residues: uncharacterized protein (605 aa).

2 disordered regions span residues 10 to 78 (RRGG…FPPA) and 216 to 248 (RAPD…VRNP). Residues 20–48 (AGGRPAAGGRPAAGGRPAAGSRAAAGAAG) are compositionally biased toward low complexity. The span at 220-233 (CPSPRTPMVKPPFR) shows a compositional bias: pro residues.

This is an uncharacterized protein from Dryophytes versicolor (chameleon treefrog).